The primary structure comprises 91 residues: Small ribosomal subunit protein bS18 (91 aa).

It belongs to the bacterial ribosomal protein bS18 family. As to quaternary structure, part of the 30S ribosomal subunit. Forms a tight heterodimer with protein bS6.

In terms of biological role, binds as a heterodimer with protein bS6 to the central domain of the 16S rRNA, where it helps stabilize the platform of the 30S subunit. The polypeptide is Small ribosomal subunit protein bS18 (Burkholderia ambifaria (strain MC40-6)).